The sequence spans 425 residues: tRNA(Ile)-lysidine synthase (425 aa).

Residue 27-32 coordinates ATP; it reads SGGLDS.

Belongs to the tRNA(Ile)-lysidine synthase family.

It is found in the cytoplasm. It carries out the reaction cytidine(34) in tRNA(Ile2) + L-lysine + ATP = lysidine(34) in tRNA(Ile2) + AMP + diphosphate + H(+). Ligates lysine onto the cytidine present at position 34 of the AUA codon-specific tRNA(Ile) that contains the anticodon CAU, in an ATP-dependent manner. Cytidine is converted to lysidine, thus changing the amino acid specificity of the tRNA from methionine to isoleucine. This is tRNA(Ile)-lysidine synthase from Streptococcus pneumoniae (strain Taiwan19F-14).